The primary structure comprises 1072 residues: DNA-directed RNA polymerase subunit beta (1072 aa).

The protein belongs to the RNA polymerase beta chain family. As to quaternary structure, in plastids the minimal PEP RNA polymerase catalytic core is composed of four subunits: alpha, beta, beta', and beta''. When a (nuclear-encoded) sigma factor is associated with the core the holoenzyme is formed, which can initiate transcription.

The protein resides in the plastid. Its subcellular location is the chloroplast. The enzyme catalyses RNA(n) + a ribonucleoside 5'-triphosphate = RNA(n+1) + diphosphate. Functionally, DNA-dependent RNA polymerase catalyzes the transcription of DNA into RNA using the four ribonucleoside triphosphates as substrates. In Cycas taitungensis (Prince sago), this protein is DNA-directed RNA polymerase subunit beta.